Consider the following 262-residue polypeptide: Diaminopimelate epimerase (262 aa).

Positions 17, 45, and 63 each coordinate substrate. Cysteine 72 acts as the Proton donor in catalysis. Residues 73–74, asparagine 154, asparagine 187, and 205–206 contribute to the substrate site; these read GN and ER. The active-site Proton acceptor is cysteine 214. 215-216 serves as a coordination point for substrate; it reads GS.

Belongs to the diaminopimelate epimerase family. Homodimer.

The protein localises to the cytoplasm. The enzyme catalyses (2S,6S)-2,6-diaminopimelate = meso-2,6-diaminopimelate. The protein operates within amino-acid biosynthesis; L-lysine biosynthesis via DAP pathway; DL-2,6-diaminopimelate from LL-2,6-diaminopimelate: step 1/1. Functionally, catalyzes the stereoinversion of LL-2,6-diaminopimelate (L,L-DAP) to meso-diaminopimelate (meso-DAP), a precursor of L-lysine and an essential component of the bacterial peptidoglycan. The polypeptide is Diaminopimelate epimerase (Wolbachia sp. subsp. Drosophila simulans (strain wRi)).